We begin with the raw amino-acid sequence, 347 residues long: GMP reductase (347 aa).

Position 108 to 131 (108 to 131) interacts with NADP(+); sequence ADFEKTKQILDLNPALNFVCIDVA. Gly181 and Gly183 together coordinate K(+). The active-site Thioimidate intermediate is the Cys186. An NADP(+)-binding site is contributed by 216–239; it reads IISDGGCTTPGDVAKAFGGGADFV.

The protein belongs to the IMPDH/GMPR family. GuaC type 1 subfamily. In terms of assembly, homotetramer.

The enzyme catalyses IMP + NH4(+) + NADP(+) = GMP + NADPH + 2 H(+). In terms of biological role, catalyzes the irreversible NADPH-dependent deamination of GMP to IMP. It functions in the conversion of nucleobase, nucleoside and nucleotide derivatives of G to A nucleotides, and in maintaining the intracellular balance of A and G nucleotides. This Escherichia coli O157:H7 protein is GMP reductase.